Consider the following 1071-residue polypeptide: DNA-directed RNA polymerase subunit beta (1071 aa).

The protein belongs to the RNA polymerase beta chain family. In terms of assembly, in plastids the minimal PEP RNA polymerase catalytic core is composed of four subunits: alpha, beta, beta', and beta''. When a (nuclear-encoded) sigma factor is associated with the core the holoenzyme is formed, which can initiate transcription.

It is found in the plastid. It localises to the chloroplast. The catalysed reaction is RNA(n) + a ribonucleoside 5'-triphosphate = RNA(n+1) + diphosphate. In terms of biological role, DNA-dependent RNA polymerase catalyzes the transcription of DNA into RNA using the four ribonucleoside triphosphates as substrates. The protein is DNA-directed RNA polymerase subunit beta of Acorus calamus (Sweet flag).